The primary structure comprises 86 residues: Large ribosomal subunit protein bL27 (86 aa).

The interval 1 to 26 (MAHKKAAGSTRNGRDSESKRLGVKRY) is disordered.

It belongs to the bacterial ribosomal protein bL27 family.

The polypeptide is Large ribosomal subunit protein bL27 (Marinobacter nauticus (strain ATCC 700491 / DSM 11845 / VT8) (Marinobacter aquaeolei)).